The chain runs to 344 residues: Anthranilate phosphoribosyltransferase 2 (344 aa).

5-phospho-alpha-D-ribose 1-diphosphate-binding positions include G81, 84–85, T89, 91–94, 109–117, and A121; these read GD, NIST, and KHGNRALSS. G81 provides a ligand contact to anthranilate. S93 contributes to the Mg(2+) binding site. N112 contributes to the anthranilate binding site. R167 provides a ligand contact to anthranilate. Mg(2+) contacts are provided by D226 and E227.

This sequence belongs to the anthranilate phosphoribosyltransferase family. As to quaternary structure, homodimer. Mg(2+) is required as a cofactor.

It carries out the reaction N-(5-phospho-beta-D-ribosyl)anthranilate + diphosphate = 5-phospho-alpha-D-ribose 1-diphosphate + anthranilate. Its pathway is amino-acid biosynthesis; L-tryptophan biosynthesis; L-tryptophan from chorismate: step 2/5. In terms of biological role, catalyzes the transfer of the phosphoribosyl group of 5-phosphorylribose-1-pyrophosphate (PRPP) to anthranilate to yield N-(5'-phosphoribosyl)-anthranilate (PRA). The sequence is that of Anthranilate phosphoribosyltransferase 2 from Ralstonia nicotianae (strain ATCC BAA-1114 / GMI1000) (Ralstonia solanacearum).